Here is a 321-residue protein sequence, read N- to C-terminus: Ribose-phosphate pyrophosphokinase (321 aa).

ATP is bound by residues 44 to 46 (DGE) and 103 to 104 (RQ). Positions 137 and 179 each coordinate Mg(2+). Lysine 202 is a catalytic residue. Residues arginine 204, aspartate 228, and 232-236 (DTAGT) contribute to the D-ribose 5-phosphate site.

Belongs to the ribose-phosphate pyrophosphokinase family. Class I subfamily. As to quaternary structure, homohexamer. Mg(2+) is required as a cofactor.

Its subcellular location is the cytoplasm. The catalysed reaction is D-ribose 5-phosphate + ATP = 5-phospho-alpha-D-ribose 1-diphosphate + AMP + H(+). Its pathway is metabolic intermediate biosynthesis; 5-phospho-alpha-D-ribose 1-diphosphate biosynthesis; 5-phospho-alpha-D-ribose 1-diphosphate from D-ribose 5-phosphate (route I): step 1/1. In terms of biological role, involved in the biosynthesis of the central metabolite phospho-alpha-D-ribosyl-1-pyrophosphate (PRPP) via the transfer of pyrophosphoryl group from ATP to 1-hydroxyl of ribose-5-phosphate (Rib-5-P). In Staphylococcus haemolyticus (strain JCSC1435), this protein is Ribose-phosphate pyrophosphokinase.